A 161-amino-acid chain; its full sequence is Allophycocyanin beta chain (161 aa).

N71 is modified (N4-methylasparagine). Residue C81 coordinates (2R,3E)-phycocyanobilin.

This sequence belongs to the phycobiliprotein family. Heterodimer of an alpha and a beta chain. Contains one covalently linked phycocyanobilin chromophore.

It is found in the plastid. The protein resides in the chloroplast thylakoid membrane. Its function is as follows. Light-harvesting photosynthetic bile pigment-protein from the phycobiliprotein complex. Allophycocyanin has a maximum absorption at approximately 650 nanometers. The polypeptide is Allophycocyanin beta chain (apcB) (Cyanidium caldarium (Red alga)).